Consider the following 215-residue polypeptide: Thymidylate kinase (215 aa).

Residue 7–14 (GMEGSGKS) participates in ATP binding.

Belongs to the thymidylate kinase family.

It carries out the reaction dTMP + ATP = dTDP + ADP. Phosphorylation of dTMP to form dTDP in both de novo and salvage pathways of dTTP synthesis. This is Thymidylate kinase from Nitratidesulfovibrio vulgaris (strain DSM 19637 / Miyazaki F) (Desulfovibrio vulgaris).